Reading from the N-terminus, the 239-residue chain is Ribonuclease PH (239 aa).

Phosphate is bound by residues R87 and G125–R127.

It belongs to the RNase PH family. As to quaternary structure, homohexameric ring arranged as a trimer of dimers.

It catalyses the reaction tRNA(n+1) + phosphate = tRNA(n) + a ribonucleoside 5'-diphosphate. In terms of biological role, phosphorolytic 3'-5' exoribonuclease that plays an important role in tRNA 3'-end maturation. Removes nucleotide residues following the 3'-CCA terminus of tRNAs; can also add nucleotides to the ends of RNA molecules by using nucleoside diphosphates as substrates, but this may not be physiologically important. Probably plays a role in initiation of 16S rRNA degradation (leading to ribosome degradation) during starvation. The protein is Ribonuclease PH of Syntrophomonas wolfei subsp. wolfei (strain DSM 2245B / Goettingen).